The following is a 284-amino-acid chain: Shikimate dehydrogenase (NADP(+)) (284 aa).

Residues 20 to 22 (SIS) and serine 67 each bind shikimate. Lysine 71 acts as the Proton acceptor in catalysis. Aspartate 83 is an NADP(+) binding site. Asparagine 92 and aspartate 107 together coordinate shikimate. NADP(+) contacts are provided by residues 129 to 133 (GAGGA) and isoleucine 227. Tyrosine 229 contributes to the shikimate binding site. Residue glycine 250 participates in NADP(+) binding.

The protein belongs to the shikimate dehydrogenase family. Homodimer.

The enzyme catalyses shikimate + NADP(+) = 3-dehydroshikimate + NADPH + H(+). It functions in the pathway metabolic intermediate biosynthesis; chorismate biosynthesis; chorismate from D-erythrose 4-phosphate and phosphoenolpyruvate: step 4/7. Functionally, involved in the biosynthesis of the chorismate, which leads to the biosynthesis of aromatic amino acids. Catalyzes the reversible NADPH linked reduction of 3-dehydroshikimate (DHSA) to yield shikimate (SA). The chain is Shikimate dehydrogenase (NADP(+)) from Streptococcus pneumoniae (strain 70585).